The following is a 792-amino-acid chain: MSDSIYAPHNKHKLEAARAADAAADDAATVSALVEPTDSTAQASHAAEQTIDAHQQAGDVEPERCHPHLTRPLLYLSGVDATMTDKELAGLVFDQVLPVRLKIDRTVGEGQTASGTVEFQTLDKAEKAYATVRPPIQLRINQDASIREPHPSAKPRLVKQLPPTSDDAFVYDLFRPFGPLRRAQCLLTNPAGIHTGFKGMAVLEFYSEQDAQRAESEMHCSEVGGKSISVAIDTATRKVSAAAAEFRPSAAAFVPAGSMSPSAPSFDPYPAGSRSVSTGSAASIYATSGAAPTHDTRNGAQKGARVPLQYSSQASTYVDPCNLFIKNLDPNMESNDLFDTFKRFGHIVSARVMRDDNGKSREFGFVSFTTPDEAQQALQAMDNAKLGTKKIIVRLHEPKTMRQEKLAARYNAANADNSDMSSNSPPTEARKADKRQSRSYFKAGVPSDASGLVDEEQLRSLSTVVRNELLSGEFTRRIPKVSSVTEAQLDDVVGELLSLKLADAVEALNNPISLIQRISDAREQLAQKSASTLTAPSPAPLSAEHPAMLGIQAQRSVSSASSTGEGGASVKERERLLKAVISVTESGAPVEDITDMIASLPKKDRALALFNPEFLKQKVDEAKDILDITDESGEDLSPPRASSGSAPVPLSVQTPASAIFKDASNGQSSISPGAAEAYTLSTLAALPAAEIVRLANSQSSSGLPLPKADPATVKATDDFIDSLQGKAAHDQKQKLGDQLFKKIRTFGVKGAPKLTIHLLDSEDLRALAHLMNSYEDVLKEKVQHKVAAGLNK.

A disordered region spans residues 37–60 (TDSTAQASHAAEQTIDAHQQAGDV). 3 RRM domains span residues 72–145 (PLLY…QDAS), 154–235 (KPRL…IDTA), and 321–398 (CNLF…LHEP). Residues 412 to 424 (AANADNSDMSSNS) are compositionally biased toward low complexity. Disordered stretches follow at residues 412–438 (AANA…RQSR) and 630–649 (DESG…APVP). The segment covering 640-649 (RASSGSAPVP) has biased composition (polar residues). The PABC domain maps to 715 to 792 (ATDDFIDSLQ…QHKVAAGLNK (78 aa)).

It belongs to the polyadenylate-binding protein type-1 family. Part of large ribonucleoprotein complexes (mRNPs) containing RNA-binding proteins RRM4 and PAB1, endosome-binding protein UPA1, core scaffold protein UPA2 and associated factor GRP1. Interacts (via PABC domain) with UPA1 (via PAM2 domain).

Its subcellular location is the cytoplasm. It is found in the cytoskeleton. The protein localises to the endosome. Key RNA-binding protein involved in the formation of polar-growing hyphae which is essential for infection by the plant pathogen. During filamentation, assembles into particles that shuttle bidirectionally along microtubules to both poles. The RRM4 transport particles are part of the endosomal mRNP transport that regulates polarity of the infectious hyphae by transporting distinct mRNAs encoding, for example, the ubiquitin fusion protein UBI1, the small G protein RHO3, or the septin CDC3, from the nucleus to cell poles. Recognizes a broad spectrum of cargo mRNAs and precisely binds at stop codons, which constitute landmark sites of translation, suggesting an intimate connection of mRNA transport and translation. Also binds to the specific binding motif UAUG of cargo mRNAs via its third RRM. Plus-end-directed KIN3, a kinesin-3 type motor, mediates anterograde transport of RRM4-containing mRNPs whereas split dynein DYM1-DYN2 functions in retrograde movement of mRNPs. The protein is RNA-binding protein RRM4 of Mycosarcoma maydis (Corn smut fungus).